A 294-amino-acid chain; its full sequence is NAD kinase (294 aa).

The active-site Proton acceptor is D74. NAD(+)-binding positions include 74–75 (DG), 148–149 (ND), R159, R176, D178, 189–194 (TAYALS), and Q247.

Belongs to the NAD kinase family. It depends on a divalent metal cation as a cofactor.

It is found in the cytoplasm. The catalysed reaction is NAD(+) + ATP = ADP + NADP(+) + H(+). Involved in the regulation of the intracellular balance of NAD and NADP, and is a key enzyme in the biosynthesis of NADP. Catalyzes specifically the phosphorylation on 2'-hydroxyl of the adenosine moiety of NAD to yield NADP. The chain is NAD kinase from Azoarcus sp. (strain BH72).